A 449-amino-acid chain; its full sequence is MFS-type transporter hasB (449 aa).

The next 12 membrane-spanning stretches (helical) occupy residues 44–64, 80–100, 112–132, 135–155, 168–188, 195–215, 255–275, 296–316, 322–342, 346–366, 387–407, and 415–435; these read VAGSFLLQFCSFGYVNACGIF, ALAWITTLQIFLLFMFGPAVG, LPPFSIGAVFSVCMLSLCTKY, VMLAQGVAFGLAAAGLSLPAM, LAVGIVSAGSSLGGVIYPCML, VGFASAVRWTALMQGILLFIA, LPWGFFVLGCFFTMWGLFAPL, AIANAGSLVGRIVPGWVSDII, MCIVTSLSGVLVLAFWLPLEF, LAGIIVFALLFGFVSGGFVSL, GGFCLAIALGALTGLPIEGAI, and FTGLMCFAGATMILGGVCTGT.

The protein belongs to the major facilitator superfamily. Monocarboxylate porter (TC 2.A.1.13) family.

The protein resides in the membrane. Its function is as follows. MFS-type transporter; part of the gene cluster that mediates the biosynthesis of hexadehydro-astechrome (HAS), a tryptophan-derived iron(III)-complex that acts as a virulence factor in infected mice. Required for the production of HAS. This Aspergillus fumigatus (strain CBS 144.89 / FGSC A1163 / CEA10) (Neosartorya fumigata) protein is MFS-type transporter hasB.